The sequence spans 30 residues: Sperm protamine P5 (30 aa).

The interval 1 to 30 is disordered; that stretch reads YRRRRRRGRRGRRRRGRRRRSRGRRRAHGG.

As to expression, testis.

It is found in the nucleus. It localises to the chromosome. Protamines substitute for histones in the chromatin of sperm during the haploid phase of spermatogenesis. They compact sperm DNA into a highly condensed, stable and inactive complex. The polypeptide is Sperm protamine P5 (Octopus vulgaris (Common octopus)).